The primary structure comprises 311 residues: CARD domain-containing protein E10 (311 aa).

A CARD domain is found at 21–110 (IWDVERLCLE…EHLVDLLERA (90 aa)). Disordered stretches follow at residues 125–181 (ESGA…GGVY), 203–230 (GAGR…GGRD), and 243–311 (IPEP…FFCC). The segment covering 140-152 (EDNSGYTALLPTN) has biased composition (polar residues). A compositionally biased stretch (gly residues) spans 252–272 (SGGGGRGGGVRYDAGGDGRLG).

The protein localises to the host cell membrane. Functionally, activates host NF-kappa-B and JNK pathways. Induces hyperphosphorylation and redistribution of host bcl-10 from the cytoplasm to the plasma membrane. The inhibitory effect of cellular bcl-10 on NF-kappa-B pathway is then overcome allowing NF-kappa-B activation. This chain is CARD domain-containing protein E10 (E10), found in Equus caballus (Horse).